A 136-amino-acid chain; its full sequence is Small ribosomal subunit protein uS9 (136 aa).

The tract at residues 97 to 136 is disordered; sequence SPDNRKPLKTEGHLSRDPRAKERRKYGLKKARKAPQFSKR. The segment covering 98-116 has biased composition (basic and acidic residues); that stretch reads PDNRKPLKTEGHLSRDPRA. Residues 117-136 are compositionally biased toward basic residues; sequence KERRKYGLKKARKAPQFSKR.

The protein belongs to the universal ribosomal protein uS9 family.

This is Small ribosomal subunit protein uS9 from Prochlorococcus marinus (strain MIT 9301).